The sequence spans 496 residues: Glycerol kinase (496 aa).

ADP is bound at residue threonine 11. ATP-binding residues include threonine 11, threonine 12, and serine 13. Threonine 11 provides a ligand contact to sn-glycerol 3-phosphate. Arginine 15 is a binding site for ADP. Arginine 81, glutamate 82, tyrosine 133, and aspartate 242 together coordinate sn-glycerol 3-phosphate. Residues arginine 81, glutamate 82, tyrosine 133, aspartate 242, and glutamine 243 each contribute to the glycerol site. Residues threonine 264 and glycine 307 each coordinate ADP. ATP-binding residues include threonine 264, glycine 307, and glutamine 311. Asparagine 413 provides a ligand contact to ADP.

This sequence belongs to the FGGY kinase family.

It catalyses the reaction glycerol + ATP = sn-glycerol 3-phosphate + ADP + H(+). It functions in the pathway polyol metabolism; glycerol degradation via glycerol kinase pathway; sn-glycerol 3-phosphate from glycerol: step 1/1. Its activity is regulated as follows. Inhibited by fructose 1,6-bisphosphate (FBP). Its function is as follows. Key enzyme in the regulation of glycerol uptake and metabolism. Catalyzes the phosphorylation of glycerol to yield sn-glycerol 3-phosphate. The chain is Glycerol kinase from Borrelia duttonii (strain Ly).